The chain runs to 353 residues: Protein RecA (353 aa).

80–87 (GPESSGKT) contributes to the ATP binding site.

It belongs to the RecA family.

It is found in the cytoplasm. Can catalyze the hydrolysis of ATP in the presence of single-stranded DNA, the ATP-dependent uptake of single-stranded DNA by duplex DNA, and the ATP-dependent hybridization of homologous single-stranded DNAs. It interacts with LexA causing its activation and leading to its autocatalytic cleavage. The sequence is that of Protein RecA from Chlorobium chlorochromatii (strain CaD3).